The chain runs to 312 residues: Olfactory receptor 1D2 (312 aa).

The Extracellular segment spans residues 1-25 (MDGGNQSEGSEFLLLGMSESPEQQQ). N5 carries N-linked (GlcNAc...) asparagine glycosylation. The helical transmembrane segment at 26–49 (ILFWMFLSMYLVTVVGNVLIILAI) threads the bilayer. The Cytoplasmic portion of the chain corresponds to 50–57 (NSDSHLHT). Residues 58–79 (PMYFFLANLSFTDLFFVTNTIP) form a helical membrane-spanning segment. Residues 80–100 (KMLVNLQSQNKAISYAGCLTQ) lie on the Extracellular side of the membrane. C97 and C189 are oxidised to a cystine. Residues 101–120 (LYFLVSLVALDNLILAVMAY) traverse the membrane as a helical segment. Residues 121-139 (DRYVAICCPLHYTTAMSPK) lie on the Cytoplasmic side of the membrane. A helical membrane pass occupies residues 140–158 (LCILLLSLCWVLSVLYGLI). At 159-196 (HTILMTRVTFCGSRKIHYIFCEMYVLLRMACSNIQINH) the chain is on the extracellular side. A glycan (N-linked (GlcNAc...) asparagine) is linked at N195. The chain crosses the membrane as a helical span at residues 197-219 (TVLIATGCFIFLIPFGFVIISYV). Topologically, residues 220-236 (LIIRAILRIPSVSKKYK) are cytoplasmic. A helical transmembrane segment spans residues 237–259 (AFSTCASHLGAVSLFYGTLCMVY). Over 260 to 271 (LKPLHTFSVKDS) the chain is Extracellular. Residues 272 to 291 (VATVMYAVVTPMMNPFIYSL) form a helical membrane-spanning segment. Topologically, residues 292 to 312 (RNKDMHGALGRLLDTHFKRLT) are cytoplasmic.

This sequence belongs to the G-protein coupled receptor 1 family.

It is found in the cell membrane. Odorant receptor. The protein is Olfactory receptor 1D2 (OR1D2) of Gorilla gorilla gorilla (Western lowland gorilla).